We begin with the raw amino-acid sequence, 526 residues long: Probable feruloyl esterase B-2 (526 aa).

The first 18 residues, 1–18 (MTKLSLLPLLTLASAVLA), serve as a signal peptide directing secretion. Disulfide bonds link Cys27/Cys74 and Cys62/Cys113. The N-linked (GlcNAc...) asparagine glycan is linked to Asn52. Asn137 carries an N-linked (GlcNAc...) asparagine glycan. Cystine bridges form between Cys186/Cys441, Cys255/Cys272, Cys281/Cys291, and Cys503/Cys525. Residue Ser187 is the Acyl-ester intermediate of the active site. A glycan (N-linked (GlcNAc...) asparagine) is linked at Asn233. Residues Asp256, Asp259, Ala261, Asp263, and Ile265 each coordinate Ca(2+). Catalysis depends on charge relay system residues Asp400 and His440. The N-linked (GlcNAc...) asparagine glycan is linked to Asn516.

The protein belongs to the tannase family.

It localises to the secreted. The catalysed reaction is feruloyl-polysaccharide + H2O = ferulate + polysaccharide.. Its function is as follows. Involved in degradation of plant cell walls. Hydrolyzes the feruloyl-arabinose ester bond in arabinoxylans as well as the feruloyl-galactose and feruloyl-arabinose ester bonds in pectin. This Aspergillus fumigatus (strain ATCC MYA-4609 / CBS 101355 / FGSC A1100 / Af293) (Neosartorya fumigata) protein is Probable feruloyl esterase B-2 (faeB-2).